Reading from the N-terminus, the 131-residue chain is Small ribosomal subunit protein uS9 (131 aa).

A disordered region spans residues 102 to 131 (AGFLTRDPRMKERRKYGLKKARKAPQFSKR). Positions 112–131 (KERRKYGLKKARKAPQFSKR) are enriched in basic residues.

The protein belongs to the universal ribosomal protein uS9 family.

In Desulfitobacterium hafniense (strain DSM 10664 / DCB-2), this protein is Small ribosomal subunit protein uS9.